The primary structure comprises 168 residues: Ubiquitin-conjugating enzyme E2 2 (168 aa).

One can recognise a UBC core domain in the interval proline 4–asparagine 150. The active-site Glycyl thioester intermediate is cysteine 88. Positions glutamate 143–glutamate 168 are disordered. Acidic residues predominate over residues tryptophan 149–glutamate 168.

It belongs to the ubiquitin-conjugating enzyme family.

The protein resides in the cytoplasm. Its subcellular location is the nucleus. It catalyses the reaction S-ubiquitinyl-[E1 ubiquitin-activating enzyme]-L-cysteine + [E2 ubiquitin-conjugating enzyme]-L-cysteine = [E1 ubiquitin-activating enzyme]-L-cysteine + S-ubiquitinyl-[E2 ubiquitin-conjugating enzyme]-L-cysteine.. It functions in the pathway protein modification; protein ubiquitination. Functionally, catalyzes the covalent attachment of ubiquitin to other proteins. Plays a role in transcription regulation by catalyzing the monoubiquitination of histone H2B to form H2BK123ub1. H2BK123ub1 gives a specific tag for epigenetic transcriptional activation and is also a prerequisite for H3K4me and H3K79me formation. Also involved in postreplication repair of UV-damaged DNA, in N-end rule-dependent protein degradation and in sporulation. The sequence is that of Ubiquitin-conjugating enzyme E2 2 (UBC2) from Debaryomyces hansenii (strain ATCC 36239 / CBS 767 / BCRC 21394 / JCM 1990 / NBRC 0083 / IGC 2968) (Yeast).